A 265-amino-acid polypeptide reads, in one-letter code: tRNA (guanine-N(7)-)-methyltransferase (265 aa).

Residues 1 to 40 (MIHDDDPNAPGAPHDDDATAAPASATRAAPAAGDDDDANP) are disordered. Positions 19–32 (TAAPASATRAAPAA) are enriched in low complexity. Residues Glu95, Glu120, Asp147, and Asp170 each contribute to the S-adenosyl-L-methionine site. Asp170 is an active-site residue. Residues Lys174, Asp206, and 241-244 (TKFE) contribute to the substrate site.

It belongs to the class I-like SAM-binding methyltransferase superfamily. TrmB family.

It carries out the reaction guanosine(46) in tRNA + S-adenosyl-L-methionine = N(7)-methylguanosine(46) in tRNA + S-adenosyl-L-homocysteine. It functions in the pathway tRNA modification; N(7)-methylguanine-tRNA biosynthesis. Its function is as follows. Catalyzes the formation of N(7)-methylguanine at position 46 (m7G46) in tRNA. In Burkholderia pseudomallei (strain 1710b), this protein is tRNA (guanine-N(7)-)-methyltransferase.